We begin with the raw amino-acid sequence, 339 residues long: Putative ABC transporter ATP-binding protein MG467 homolog (339 aa).

Residues 41-87 (KKTKKAKPAKVKKVKEPKAKAVKPEQVKPTKTTKAPKPKKPKKQGGL) form a disordered region. The span at 42 to 53 (KTKKAKPAKVKK) shows a compositional bias: basic residues. The segment covering 54 to 68 (VKEPKAKAVKPEQVK) has biased composition (basic and acidic residues). The span at 74–83 (KAPKPKKPKK) shows a compositional bias: basic residues. The ABC transporter domain maps to 112–338 (ISIDKMWKHV…IVSNELVRPL (227 aa)). 150-157 (GPSGSGKT) provides a ligand contact to ATP.

The protein belongs to the ABC transporter superfamily.

The sequence is that of Putative ABC transporter ATP-binding protein MG467 homolog from Mycoplasma pneumoniae (strain ATCC 29342 / M129 / Subtype 1) (Mycoplasmoides pneumoniae).